The following is a 126-amino-acid chain: Nitrogenase-stabilizing/protective protein NifW (126 aa).

The segment at 104–126 is disordered; the sequence is VPMSEITVERPATTQTDEKGQQR.

Belongs to the NifW family. As to quaternary structure, homotrimer; associates with NifD.

In terms of biological role, may protect the nitrogenase Fe-Mo protein from oxidative damage. This Parafrankia sp. (strain EAN1pec) protein is Nitrogenase-stabilizing/protective protein NifW.